The sequence spans 138 residues: Putative pre-16S rRNA nuclease (138 aa).

It belongs to the YqgF nuclease family.

The protein resides in the cytoplasm. Functionally, could be a nuclease involved in processing of the 5'-end of pre-16S rRNA. This chain is Putative pre-16S rRNA nuclease, found in Azobacteroides pseudotrichonymphae genomovar. CFP2.